The following is a 178-amino-acid chain: Peptide methionine sulfoxide reductase MsrA (178 aa).

The active site involves Cys12.

Belongs to the MsrA Met sulfoxide reductase family.

The catalysed reaction is L-methionyl-[protein] + [thioredoxin]-disulfide + H2O = L-methionyl-(S)-S-oxide-[protein] + [thioredoxin]-dithiol. It catalyses the reaction [thioredoxin]-disulfide + L-methionine + H2O = L-methionine (S)-S-oxide + [thioredoxin]-dithiol. Its function is as follows. Has an important function as a repair enzyme for proteins that have been inactivated by oxidation. Catalyzes the reversible oxidation-reduction of methionine sulfoxide in proteins to methionine. The protein is Peptide methionine sulfoxide reductase MsrA of Erwinia tasmaniensis (strain DSM 17950 / CFBP 7177 / CIP 109463 / NCPPB 4357 / Et1/99).